A 352-amino-acid polypeptide reads, in one-letter code: Leukotriene B4 receptor 1 (352 aa).

Residues 1–19 (MNTTSSAAPPSLGVEFISL) are Extracellular-facing. The N-linked (GlcNAc...) asparagine glycan is linked to Asn2. The helical transmembrane segment at 20-42 (LAIILLSVALAVGLPGNSFVVWS) threads the bilayer. Over 43-54 (ILKRMQKRSVTA) the chain is Cytoplasmic. A helical transmembrane segment spans residues 55-75 (LMVLNLALADLAVLLTAPFFL). Residues 76-91 (HFLAQGTWSFGLAGCR) are Extracellular-facing. Residues 92–113 (LCHYVCGVSMYASVLLITAMSL) traverse the membrane as a helical segment. At 114-138 (DRSLAVARPFVSQKLRTKAMARRVL) the chain is on the cytoplasmic side. The helical transmembrane segment at 139–159 (AGIWVLSFLLATPVLAYRTVV) threads the bilayer. Residues 160–178 (PWKTNMSLCFPRYPSEGHR) lie on the Extracellular side of the membrane. An N-linked (GlcNAc...) asparagine glycan is attached at Asn164. A helical membrane pass occupies residues 179–199 (AFHLIFEAVTGFLLPFLAVVA). Over 200–221 (SYSDIGRRLQARRFRRSRRTGR) the chain is Cytoplasmic. A helical membrane pass occupies residues 222–242 (LVVLIILTFAAFWLPYHVVNL). Topologically, residues 243–268 (AEAGRALAGQAAGLGLVGKRLSLARN) are extracellular. The helical transmembrane segment at 269 to 289 (VLIALAFLSSSVNPVLYACAG) threads the bilayer. Residues 290 to 352 (GGLLRSAGVG…SSPLKLNELN (63 aa)) are Cytoplasmic-facing. Composition is skewed to polar residues over residues 310–326 (SEASSTRRGGSLGQTAR) and 338–352 (ESLTASSPLKLNELN). The tract at residues 310–352 (SEASSTRRGGSLGQTARSGPAALEPGPSESLTASSPLKLNELN) is disordered.

It belongs to the G-protein coupled receptor 1 family. In terms of processing, phosphorylated by GRK6 upon leukotriene B4 binding; which promotes desensitization. As to expression, expressed at highest levels in heart, skeletal muscle and at lower levels in brain and liver. High level of expression in lymphoid tissues.

The protein resides in the cell membrane. Receptor for extracellular ATP &gt; UTP and ADP. The activity of this receptor is mediated by G proteins which activate a phosphatidylinositol-calcium second messenger system. May be the cardiac P2Y receptor involved in the regulation of cardiac muscle contraction through modulation of L-type calcium currents. Is a receptor for leukotriene B4, a potent chemoattractant involved in inflammation and immune response. The polypeptide is Leukotriene B4 receptor 1 (LTB4R) (Homo sapiens (Human)).